We begin with the raw amino-acid sequence, 375 residues long: DNA replication and repair protein RecF (375 aa).

30 to 37 contacts ATP; the sequence is GNNGSGKS.

The protein belongs to the RecF family.

It localises to the cytoplasm. Its function is as follows. The RecF protein is involved in DNA metabolism; it is required for DNA replication and normal SOS inducibility. RecF binds preferentially to single-stranded, linear DNA. It also seems to bind ATP. This Hahella chejuensis (strain KCTC 2396) protein is DNA replication and repair protein RecF.